The primary structure comprises 499 residues: Potassium voltage-gated channel subfamily A member 2 (499 aa).

Residues 1–26 form a disordered region; that stretch reads MTVATGDPADEAAALPGHPQDTYDPE. The interval 1 to 125 is tetramerization domain; that stretch reads MTVATGDPAD…YELGEEAMEM (125 aa). Over 1-160 the chain is Cytoplasmic; sequence MTVATGDPAD…LLFEYPESSG (160 aa). Residues 161–182 traverse the membrane as a helical segment; it reads PARIIAIVSVMVILISIVSFCL. The Extracellular segment spans residues 183–221; that stretch reads ETLPIFRDENEDMHGSGVTFHTYSNSTIGYQQSTSFTDP. Asn-207 carries an N-linked (GlcNAc...) asparagine glycan. Residues 222–243 form a helical membrane-spanning segment; the sequence is FFIVETLCIIWFSFEFLVRFFA. The S-palmitoyl cysteine moiety is linked to residue Cys-244. Topologically, residues 244–254 are cytoplasmic; sequence CPSKAGFFTNI. Residues 255–275 form a helical membrane-spanning segment; the sequence is MNIIDIVAIIPYFITLGTELA. Over 276 to 289 the chain is Extracellular; the sequence is EKPEDAQQGQQAMS. Residues 290–310 traverse the membrane as a helical; Voltage-sensor segment; that stretch reads LAILRVIRLVRVFRIFKLSRH. The Cytoplasmic portion of the chain corresponds to 311-325; it reads SKGLQILGQTLKASM. The tract at residues 312–325 is S4-S5 linker; the sequence is KGLQILGQTLKASM. Residues 326-347 traverse the membrane as a helical segment; the sequence is RELGLLIFFLFIGVILFSSAVY. Residues 348–361 lie on the Extracellular side of the membrane; the sequence is FAEADERESQFPSI. The helical intramembrane region spans 362–373; it reads PDAFWWAVVSMT. Positions 374–379 match the Selectivity filter motif; it reads TVGYGD. Residues 374 to 381 lie within the membrane without spanning it; that stretch reads TVGYGDMV. Over 382-388 the chain is Extracellular; the sequence is PTTIGGK. The chain crosses the membrane as a helical span at residues 389–417; it reads IVGSLCAIAGVLTIALPVPVIVSNFNYFY. At 418–499 the chain is on the cytoplasmic side; that stretch reads HRETEGEEQA…VNITKMLTDV (82 aa). Tyr-429 bears the Phosphotyrosine mark. A phosphoserine mark is found at Ser-434, Ser-440, Ser-441, and Ser-449. Tyr-458 is modified (phosphotyrosine). Ser-468 bears the Phosphoserine mark. Positions 497-499 match the PDZ-binding motif; sequence TDV.

It belongs to the potassium channel family. A (Shaker) (TC 1.A.1.2) subfamily. Kv1.2/KCNA2 sub-subfamily. As to quaternary structure, homotetramer and heterotetramer with other channel-forming alpha subunits, such as KCNA1, KCNA4, KCNA5, KCNA6 and KCNA7. Channel activity is regulated by interaction with the beta subunits, including KCNAB1 and KCNAB2. Identified in a complex with KCNA1 and KCNAB2. Identified in a complex with KCNA5 and KCNAB1. Identified in a complex with KCNA4 and FYN. Interacts with the beta subunit KCNAB1. Interacts with PTK2B. Interacts (via C-terminus) with CTTN. Interacts (via N-terminal cytoplasmic domain) with RHOA (GTP-bound form); this regulates channel activity by reducing location at the cell surface in response to CHRM1 activation. Interacts with DRD2. Interacts with SIGMAR1; cocaine consumption leads to increased interaction. Interacts with ADAM22. Interacts (via C-terminus) with the PDZ domains of DLG1, DLG2 and DLG4. Interacts with CNTNAP2. Interacts with ADAM11. Interacts with LYNX1. Post-translationally, phosphorylated on tyrosine residues; phosphorylation increases in response to ischemia. Phosphorylated on tyrosine residues by activated PTK2B/PYK2. Phosphorylation on tyrosine residues suppresses ion channel activity. Phosphorylated on tyrosine residues in response to CHRM1 activation; this abolishes interaction with CTTN. This is probably due to endocytosis of the phosphorylated channel subunits. Phosphorylated on serine residues in response to increased cAMP levels; phosphorylation is apparently not catalyzed by PKA. N-glycosylated, with complex, sialylated N-glycans. As to expression, detected in brain cortex. Detected in peroneal nerve in the juxtaparanodal regions of the node of Ranvier; expression is decreased in patients with diabetes mellitus that suffer from axonal neuropathy. Detected in paranodal and juxtanodal zones in myelinated spinal cord (at protein level).

Its subcellular location is the cell membrane. It is found in the membrane. The protein resides in the cell projection. It localises to the axon. The protein localises to the synapse. Its subcellular location is the endoplasmic reticulum membrane. It is found in the lamellipodium membrane. The protein resides in the synaptosome. It localises to the presynaptic cell membrane. The protein localises to the dendrite. Its subcellular location is the cell junction. It is found in the paranodal septate junction. The enzyme catalyses K(+)(in) = K(+)(out). With respect to regulation, inhibited by 4-aminopyridine (4-AP) and charybdotoxin (CTX), but not by tetraethylammonium (TEA). Inhibited by dendrotoxin (DTX). Inhibited by tityustoxin-K alpha (TsTX-Kalpha), a toxin that is highly specific for KCNA2. Inhibited by maurotoxin. Inhibited by kappaM conotoxins kappaM-RIIIJ and kappaM-RIIIK; kappaM-RIIIJ has much higher affinity for channels containing KCNA2 than kappaM-RIIIK, with the exception of heterodimers formed by KCNA2 and KCNA7 where the opposite is true. Functionally, voltage-gated potassium channel that mediates transmembrane potassium transport in excitable membranes, primarily in the brain and the central nervous system, but also in the cardiovascular system. Prevents aberrant action potential firing and regulates neuronal output. Forms tetrameric potassium-selective channels through which potassium ions pass in accordance with their electrochemical gradient. The channel alternates between opened and closed conformations in response to the voltage difference across the membrane. Can form functional homotetrameric channels and heterotetrameric channels that contain variable proportions of KCNA1, KCNA2, KCNA4, KCNA5, KCNA6, KCNA7, and possibly other family members as well; channel properties depend on the type of alpha subunits that are part of the channel. Channel properties are modulated by cytoplasmic beta subunits that regulate the subcellular location of the alpha subunits and promote rapid inactivation of delayed rectifier potassium channels. In vivo, membranes probably contain a mixture of heteromeric potassium channel complexes, making it difficult to assign currents observed in intact tissues to any particular potassium channel family member. Homotetrameric KCNA2 forms a delayed-rectifier potassium channel that opens in response to membrane depolarization, followed by slow spontaneous channel closure. In contrast, a heteromultimer formed by KCNA2 and KCNA4 shows rapid inactivation. Regulates neuronal excitability and plays a role as pacemaker in the regulation of neuronal action potentials. KCNA2-containing channels play a presynaptic role and prevent hyperexcitability and aberrant action potential firing. Response to toxins that are selective for KCNA2-containing potassium channels suggests that in Purkinje cells, dendritic subthreshold KCNA2-containing potassium channels prevent random spontaneous calcium spikes, suppressing dendritic hyperexcitability without hindering the generation of somatic action potentials, and thereby play an important role in motor coordination. Plays a role in the induction of long-term potentiation of neuron excitability in the CA3 layer of the hippocampus. May function as down-stream effector for G protein-coupled receptors and inhibit GABAergic inputs to basolateral amygdala neurons. May contribute to the regulation of neurotransmitter release, such as gamma-aminobutyric acid (GABA). Contributes to the regulation of the axonal release of the neurotransmitter dopamine. Reduced KCNA2 expression plays a role in the perception of neuropathic pain after peripheral nerve injury, but not acute pain. Plays a role in the regulation of the time spent in non-rapid eye movement (NREM) sleep. The chain is Potassium voltage-gated channel subfamily A member 2 (KCNA2) from Homo sapiens (Human).